The primary structure comprises 122 residues: MIQMQSTLDVACNSGARRVQCIKVLGGSHRRYAGIGDIIKVSVKEAIPRAKAKKGDVYNAVVVRTKKGVRRPDGSVIRFDRNAAVLLNNNLQPIGTRIFGPVTRELRSEQFMKIVSLAPEVL.

It belongs to the universal ribosomal protein uL14 family. Part of the 50S ribosomal subunit. Forms a cluster with proteins L3 and L19. In the 70S ribosome, L14 and L19 interact and together make contacts with the 16S rRNA in bridges B5 and B8.

Functionally, binds to 23S rRNA. Forms part of two intersubunit bridges in the 70S ribosome. The polypeptide is Large ribosomal subunit protein uL14 (Shewanella sp. (strain ANA-3)).